The chain runs to 505 residues: Glutamate--tRNA ligase (505 aa).

A 'HIGH' region motif is present at residues 12-22 (PSPTGDPHVGT). Positions 253-257 (KLSKR) match the 'KMSKS' region motif. Lysine 256 is an ATP binding site.

It belongs to the class-I aminoacyl-tRNA synthetase family. Glutamate--tRNA ligase type 1 subfamily. As to quaternary structure, monomer.

Its subcellular location is the cytoplasm. The enzyme catalyses tRNA(Glu) + L-glutamate + ATP = L-glutamyl-tRNA(Glu) + AMP + diphosphate. Catalyzes the attachment of glutamate to tRNA(Glu) in a two-step reaction: glutamate is first activated by ATP to form Glu-AMP and then transferred to the acceptor end of tRNA(Glu). The polypeptide is Glutamate--tRNA ligase (Chlamydia pneumoniae (Chlamydophila pneumoniae)).